We begin with the raw amino-acid sequence, 732 residues long: Probable boron transporter 3 (732 aa).

Position 1 is an N-acetylmethionine (M1). Over 1 to 37 (MDEAESFVPFQGIKKDVKGRLNCYKQDWISGLRAGFR) the chain is Cytoplasmic. The helical transmembrane segment at 38 to 58 (ILAPTTYIFFASAIPVITFGE) threads the bilayer. At 59 to 77 (QLERDTDGKITAVQTLVST) the chain is on the extracellular side. Residues 78–98 (ALCGVIHSIIGGQPLLILGVA) traverse the membrane as a helical segment. Topologically, residues 99 to 123 (EPTVIMYTFMFNFAKSRTDLGSNLF) are cytoplasmic. A helical membrane pass occupies residues 124-144 (LAWTGWVCLWTGLLLFLLAVL). Topologically, residues 145–157 (GACTFINRFTRLA) are extracellular. A helical transmembrane segment spans residues 158–178 (GELFGILIAMLFMQEAIRGIV). Topologically, residues 179–197 (DEFGVPGRTNPRSAEFQPA) are cytoplasmic. A helical membrane pass occupies residues 198 to 218 (WVFANGMFGLVLSSGLLYTGL). Topologically, residues 219–234 (KSRKARSWRFGAEWLR) are extracellular. A helical transmembrane segment spans residues 235–255 (GFIADYGVPVMVVVWTCISYI). Residues 256 to 291 (PWKSVPQGIPRRLVSPNPWSPGAYQNWTVIKEMVDV) are Cytoplasmic-facing. A helical membrane pass occupies residues 292-312 (PVLYILLAVVPASMIAVLYYF). At 313 to 339 (DHSVASQLAQQEDFNLRKPPAYHYDLF) the chain is on the extracellular side. Residues 340-360 (LLGFLTILCGLIGIPPSNGVI) traverse the membrane as a helical segment. The Cytoplasmic segment spans residues 361–463 (PQSPMHTKSL…ILPVEVKEQR (103 aa)). The chain crosses the membrane as a helical span at residues 464-484 (VSNFLQAMMVAGCVAAMPLIK). The Extracellular portion of the chain corresponds to 485-556 (RIPSSVLWGY…LFQTAYLLVC (72 aa)). Residues 557–577 (FGITWVPVAGVLFPLMIMFLV) traverse the membrane as a helical segment. Residues 578 to 732 (PVRQYVLPNF…QRLSNLGKSV (155 aa)) are Cytoplasmic-facing. A disordered region spans residues 695 to 732 (GGGEISPRSSAGRAPFSPRSATGGGGGEQRLSNLGKSV).

This sequence belongs to the anion exchanger (TC 2.A.31.3) family.

It localises to the membrane. Its function is as follows. Probable boron transporter. Boron is essential for maintaining the integrity of plants cell walls. In Arabidopsis thaliana (Mouse-ear cress), this protein is Probable boron transporter 3 (BOR3).